We begin with the raw amino-acid sequence, 415 residues long: UDP-N-acetylmuramoylalanine--D-glutamate ligase (415 aa).

ATP is bound at residue 91–97 (GTDGKST).

The protein belongs to the MurCDEF family.

Its subcellular location is the cytoplasm. The enzyme catalyses UDP-N-acetyl-alpha-D-muramoyl-L-alanine + D-glutamate + ATP = UDP-N-acetyl-alpha-D-muramoyl-L-alanyl-D-glutamate + ADP + phosphate + H(+). It participates in cell wall biogenesis; peptidoglycan biosynthesis. Cell wall formation. Catalyzes the addition of glutamate to the nucleotide precursor UDP-N-acetylmuramoyl-L-alanine (UMA). This is UDP-N-acetylmuramoylalanine--D-glutamate ligase from Aquifex aeolicus (strain VF5).